We begin with the raw amino-acid sequence, 575 residues long: Alpha-(1,6)-fucosyltransferase (575 aa).

At 1–9 the chain is on the cytoplasmic side; the sequence is MRPWTGSWR. A helical; Signal-anchor for type II membrane protein membrane pass occupies residues 10–30; sequence WIMLILFAWGTLLFYIGGHLV. Residues 31 to 575 lie on the Lumenal side of the membrane; that stretch reads RDNDHPDHSS…KYPTYPEAEK (545 aa). 3 disulfide bridges follow: Cys204-Cys266, Cys212-Cys230, and Cys218-Cys222. The region spanning 206–493 is the GT23 domain; that stretch reads KAKKLVCNIN…PDASANFHSL (288 aa). A Phosphoserine modification is found at Ser278. Positions 299–305 match the SH3-binding motif; the sequence is PRPPYLP. The tract at residues 365 to 366 is important for donor substrate binding; the sequence is RR. Cys465 and Cys472 are oxidised to a cystine. Positions 502-563 constitute an SH3 domain; it reads QNAHNQIAIY…PSYKVREKIE (62 aa).

This sequence belongs to the glycosyltransferase 23 family. Post-translationally, tyrosine phosphorylated by PKDCC/VLK.

Its subcellular location is the golgi apparatus. The protein localises to the golgi stack membrane. It catalyses the reaction N(4)-{beta-D-GlcNAc-(1-&gt;2)-alpha-D-Man-(1-&gt;3)-[beta-D-GlcNAc-(1-&gt;2)-alpha-D-Man-(1-&gt;6)]-beta-D-Man-(1-&gt;4)-beta-D-GlcNAc-(1-&gt;4)-beta-D-GlcNAc}-L-asparaginyl-[protein] + GDP-beta-L-fucose = an N(4)-{beta-D-GlcNAc-(1-&gt;2)-alpha-D-Man-(1-&gt;3)-[beta-D-GlcNAc-(1-&gt;2)-alpha-D-Man-(1-&gt;6)]-beta-D-Man-(1-&gt;4)-beta-D-GlcNAc-(1-&gt;4)-[alpha-L-Fuc-(1-&gt;6)]-beta-D-GlcNAc}-L-asparaginyl-[protein] + GDP + H(+). Its pathway is protein modification; protein glycosylation. Catalyzes the addition of fucose in alpha 1-6 linkage to the first GlcNAc residue, next to the peptide chains in N-glycans. In Canis lupus familiaris (Dog), this protein is Alpha-(1,6)-fucosyltransferase (FUT8).